The sequence spans 303 residues: Nucleotide-binding protein Acry_0446 (303 aa).

Residue 10-17 participates in ATP binding; the sequence is GLSGAGRN. 54–57 contacts GTP; that stretch reads DART.

This sequence belongs to the RapZ-like family.

Displays ATPase and GTPase activities. This is Nucleotide-binding protein Acry_0446 from Acidiphilium cryptum (strain JF-5).